Reading from the N-terminus, the 370-residue chain is Aspartate beta-hydroxylase domain-containing protein 2 (370 aa).

Topologically, residues 1-57 (MVWALPRTSSPSCIAPSYKPDSGWIKMSAEWLIDWSCLLNGLRDLIAGCIQAVRDCN) are cytoplasmic. Residues 58–78 (SFALTTVICLLMLFAWYCYRV) form a helical membrane-spanning segment. Residues 79-370 (GKDQPRSPFA…ALDSIFAPGR (292 aa)) lie on the Lumenal side of the membrane. N-linked (GlcNAc...) asparagine glycosylation is present at Asn-212. Residues Trp-229 and Ser-273 each coordinate 2-oxoglutarate. His-284 contacts Fe cation. Residue 293–295 (RCH) coordinates 2-oxoglutarate. His-329 lines the Fe cation pocket. Residue Arg-342 coordinates 2-oxoglutarate.

Belongs to the aspartyl/asparaginyl beta-hydroxylase family. Requires Fe cation as cofactor.

The protein resides in the membrane. Its function is as follows. May function as 2-oxoglutarate-dependent dioxygenase. The sequence is that of Aspartate beta-hydroxylase domain-containing protein 2 (asphd2) from Xenopus tropicalis (Western clawed frog).